A 506-amino-acid chain; its full sequence is DEAD-box ATP-dependent RNA helicase CshA (506 aa).

Positions 2 to 30 match the Q motif motif; the sequence is QNFKELGISDNTVQSLESMGFKEPTPIQK. Residues 33–203 enclose the Helicase ATP-binding domain; the sequence is IPYALQGIDI…QQFMKSPKII (171 aa). Position 46-53 (46-53) interacts with ATP; it reads AQTGTGKT. Residues 150 to 153 carry the DEAD box motif; it reads DEAD. Residues 214 to 375 enclose the Helicase C-terminal domain; sequence QIEEFYTIVK…LRPPHRKEVL (162 aa). The segment at 436–506 is disordered; it reads EKPLSRKGRN…KGRTFADHQK (71 aa). Residues 468–480 show a composition bias toward basic residues; the sequence is KRSKGYSSKKKST.

This sequence belongs to the DEAD box helicase family. CshA subfamily. In terms of assembly, oligomerizes, may be a member of the RNA degradosome.

The protein localises to the cytoplasm. The catalysed reaction is ATP + H2O = ADP + phosphate + H(+). In terms of biological role, DEAD-box RNA helicase possibly involved in RNA degradation. Unwinds dsRNA in both 5'- and 3'-directions, has RNA-dependent ATPase activity. The polypeptide is DEAD-box ATP-dependent RNA helicase CshA (Staphylococcus aureus (strain MRSA252)).